Reading from the N-terminus, the 636-residue chain is 3-phosphoinositide-dependent protein kinase 1 (636 aa).

Composition is skewed to low complexity over residues 1-20 (MEDL…NNDT) and 27-37 (APTTLNLTPTA). Residues 1-45 (MEDLTPTNTSLDTTTTNNDTTSDREAAPTTLNLTPTASESENSLS) form a disordered region. The 296-residue stretch at 69 to 364 (FMFLQSMGEG…SQELMAHKFF (296 aa)) folds into the Protein kinase domain. Residues 79–81 (AYS) and K98 each bind ATP. The tract at residues 100–149 (LQKSYLNRHQKMDAIIREKNILTYLSQECGGHPFVTQLYTHFHDQARIYF) is PIF-pocket. Residues 152–154 (GLV) and D158 contribute to the ATP site. D197 serves as the catalytic Proton acceptor. 2 residues coordinate ATP: D201 and D215. Disordered stretches follow at residues 233 to 264 (TDAN…EENT) and 593 to 636 (KKSR…KKSP). The stretch at 550–631 (DLEKKADEWC…QVSKKLSMQM (82 aa)) forms a coiled coil. Positions 597–624 (KEMMREQKALRRKQEKEEKKALKAEQVS) are enriched in basic and acidic residues.

This sequence belongs to the protein kinase superfamily. AGC Ser/Thr protein kinase family. PDPK1 subfamily. As to quaternary structure, interacts directly with sgk-1, akt-1 and akt-2.

The protein localises to the cytoplasm. It catalyses the reaction L-seryl-[protein] + ATP = O-phospho-L-seryl-[protein] + ADP + H(+). The enzyme catalyses L-threonyl-[protein] + ATP = O-phospho-L-threonyl-[protein] + ADP + H(+). Functionally, involved in the daf-2/insulin receptor-like transduction pathway, which controls longevity and prevents developmental arrest at the dauer stage. Phosphorylates and activates sgk-1, akt-1 and akt-2. The sequence is that of 3-phosphoinositide-dependent protein kinase 1 from Caenorhabditis elegans.